Consider the following 67-residue polypeptide: uncharacterized protein (67 aa).

Residues 17–47 adopt a coiled-coil conformation; sequence AASLQELEKKINTQIENNKAIMLRVKSVSHQ.

This is an uncharacterized protein from Bacillus subtilis (strain 168).